The chain runs to 444 residues: C4-dicarboxylate transport protein (444 aa).

Transmembrane regions (helical) follow at residues 19–39 (HLYF…HFYP), 55–75 (LVKM…IAGM), 90–110 (IYFL…SNIL), 161–181 (ILQV…VGDL), 199–219 (LVAI…AFTI), 230–250 (LAFL…VVLG), 343–363 (LLLV…AGFI), and 366–386 (AATL…ILGI).

The protein belongs to the dicarboxylate/amino acid:cation symporter (DAACS) (TC 2.A.23) family.

The protein resides in the cell inner membrane. In terms of biological role, responsible for the transport of dicarboxylates such as succinate, fumarate, and malate from the periplasm across the membrane. The protein is C4-dicarboxylate transport protein of Allorhizobium ampelinum (strain ATCC BAA-846 / DSM 112012 / S4) (Agrobacterium vitis (strain S4)).